The sequence spans 593 residues: Vicilin Jug r 2.0101 (593 aa).

Basic and acidic residues-rich tracts occupy residues 46–76 (LEED…EQRY) and 97–118 (RRCE…DRQD). A disordered region spans residues 46–123 (LEEDQRSQEE…RDRQDPQQQY (78 aa)). IgE-binding regions lie at residues 49–58 (DQRSQEERER), 76–85 (YEQCQQQCER), and 101–110 (QRRQQEERER). Positions 140–149 (QRQCQQRCER) are igE-binding. Involved in cross-reactivity with peanut allergen Ara h 2; able to inhibit binding of IgE from a peanut-allergic patient to Ara h 2. A compositionally biased stretch (basic and acidic residues) spans 150–178 (QYKEQQGRERGPEASPRRESRGREEEQQR). The interval 150 to 184 (QYKEQQGRERGPEASPRRESRGREEEQQRHNPYYF) is disordered. 2 T-cell epitope; recognized by the HLA-DRB1-restricted CD4(+) T-cells regions span residues 175-193 (EQQR…RSRH) and 206-225 (FTER…VILD). Y182 provides a ligand contact to Cu cation. Cupin type-1 domains are found at residues 187 to 341 (QSIR…DRLE) and 386 to 556 (ISLK…EEIE). The N-linked (GlcNAc...) asparagine glycan is linked to N229. T-cell epitope; recognized by the HLA-DRB1-restricted CD4(+) T-cells stretches follow at residues 246–265 (TRGR…SFNL), 302–321 (PGQF…QSYL), 318–337 (QSYL…NTPR), 382–401 (SGGP…QFGQ), 414–433 (QEMD…MMVP), and 438–457 (KATV…MACP). Cu cation is bound by residues C456 and H458. The interval 463 to 470 (SYEGQGRR) is igE-binding. Residues 478–497 (TGRFQKVTARLARGDIFVIP) form a T-cell epitope; recognized by the HLA-DRB1-restricted CD4(+) T-cells region. Residue H500 participates in Cu cation binding. Residues 529–556 (LAGQNNIINQLEREAKELSFNMPREEIE) adopt a coiled-coil conformation. An igE-binding region spans residues 541–555 (REAKELSFNMPREEI). T-cell epitope; recognized by the HLA-DRB1-restricted CD4(+) T-cells stretches follow at residues 542 to 561 (EAKE…IFES) and 558 to 577 (IFES…SRRG).

The protein belongs to the 7S seed storage protein family. Proteolytically cleaved. Expressed in seed (at protein level).

Seed storage protein. In Juglans regia (English walnut), this protein is Vicilin Jug r 2.0101.